The chain runs to 314 residues: Carbamate kinase (314 aa).

Belongs to the carbamate kinase family. As to quaternary structure, homodimer.

Its subcellular location is the cytoplasm. The catalysed reaction is hydrogencarbonate + NH4(+) + ATP = carbamoyl phosphate + ADP + H2O + H(+). Carbamate kinase that plays a biosynthetic role in that it produces carbamoyl-phosphate. The chain is Carbamate kinase (cpkA) from Pyrococcus furiosus (strain ATCC 43587 / DSM 3638 / JCM 8422 / Vc1).